Consider the following 1365-residue polypeptide: Glucosyltransferase-S (1365 aa).

A signal peptide (or 37) is located at residues 1–36; that stretch reads MEKNLRYKLHKVKKQWVAIGVTTVTLSFLAGGQVVA. Polar residues-rich tracts occupy residues 80–89 and 127–146; these read DQTATSQVSP and RQSA…TSDQ. Disordered stretches follow at residues 80–99 and 127–152; these read DQTA…DNQV and RQSA…HLET. 2 Cell wall-binding repeats span residues 146–166 and 168–187; these read QPGH…NGQR and KNYS…QTGE. The tract at residues 200 to 1000 is catalytic; approximate; sequence QDNVPDSYQA…KPIDPSVKIT (801 aa). 10 Cell wall-binding repeats span residues 1052–1071, 1073–1092, 1093–1112, 1113–1133, 1136–1159, 1160–1179, 1234–1253, 1278–1298, 1299–1318, and 1343–1362; these read ANGF…NGQE, KNRF…DGKM, ATGK…NGKQ, LKEG…NGRT, NKGF…DGTI, AIGL…YGYQ, LTGE…NGVQ, GKGW…SGQV, LTGL…KGIQ, and RDRW…NGLA.

Belongs to the glycosyl hydrolase 70 family.

The enzyme catalyses [(1-&gt;6)-alpha-D-glucosyl](n) + sucrose = [(1-&gt;6)-alpha-D-glucosyl](n+1) + D-fructose. With respect to regulation, glucan synthesis by GTF-S is independent of primer glucan unlike GTF-I. Functionally, production of extracellular glucans, that are thought to play a key role in the development of the dental plaque because of their ability to adhere to smooth surfaces and mediate the aggregation of bacterial cells and food debris. The sequence is that of Glucosyltransferase-S (gtfS) from Streptococcus downei (Streptococcus sobrinus).